Consider the following 87-residue polypeptide: U15-lycotoxin-Ls1f (87 aa).

The first 20 residues, 1 to 20 (MNSKIFAVLLLLGLLSCVLS), serve as a signal peptide directing secretion. Positions 21 to 66 (DQYCPKSSITACKKMNIRNDCCKDDDCTGGSWCCATPCGNFCKYPT) constitute a WAP domain. Intrachain disulfides connect C24/C54, C32/C58, C41/C53, C42/C80, and C47/C62.

This sequence belongs to the venom protein 11 family. 01 (wap-1) subfamily. Contains 5 disulfide bonds. Expressed by the venom gland.

The protein resides in the secreted. In terms of biological role, has antibacterial activity. This is U15-lycotoxin-Ls1f from Lycosa singoriensis (Wolf spider).